We begin with the raw amino-acid sequence, 439 residues long: Xaa-Pro dipeptidase (439 aa).

5 residues coordinate Mn(2+): D244, D255, H335, E380, and E418.

The protein belongs to the peptidase M24B family. Bacterial-type prolidase subfamily. The cofactor is Mn(2+).

The enzyme catalyses Xaa-L-Pro dipeptide + H2O = an L-alpha-amino acid + L-proline. In terms of biological role, splits dipeptides with a prolyl residue in the C-terminal position. This is Xaa-Pro dipeptidase from Shewanella frigidimarina (strain NCIMB 400).